Reading from the N-terminus, the 80-residue chain is Conotoxin Lt6.2 (80 aa).

Residues 1–24 (MKLTRVLIIAVLFLTAYQLTTVET) form the signal peptide. A propeptide spanning residues 25-47 (YSRGKWMHRALRSTGKNPKVTRE) is cleaved from the precursor. 3 disulfides stabilise this stretch: Cys48–Cys62, Cys55–Cys66, and Cys61–Cys73.

Belongs to the conotoxin O1 superfamily. Expressed by the venom duct.

Its subcellular location is the secreted. The chain is Conotoxin Lt6.2 from Conus litteratus (Lettered cone).